The sequence spans 264 residues: Indole-3-glycerol phosphate synthase (264 aa).

Belongs to the TrpC family.

It carries out the reaction 1-(2-carboxyphenylamino)-1-deoxy-D-ribulose 5-phosphate + H(+) = (1S,2R)-1-C-(indol-3-yl)glycerol 3-phosphate + CO2 + H2O. Its pathway is amino-acid biosynthesis; L-tryptophan biosynthesis; L-tryptophan from chorismate: step 4/5. The polypeptide is Indole-3-glycerol phosphate synthase (Carboxydothermus hydrogenoformans (strain ATCC BAA-161 / DSM 6008 / Z-2901)).